The sequence spans 126 residues: Probable V-type proton ATPase subunit G (126 aa).

Positions 23–45 (NEARKRKLQRTKQAKQEAQAEVE) are disordered. Over residues 26-35 (RKRKLQRTKQ) the composition is skewed to basic residues.

The protein belongs to the V-ATPase G subunit family. V-ATPase is a heteromultimeric enzyme made up of two complexes: the ATP-hydrolytic V1 complex and the proton translocation V0 complex. The V1 complex consists of three catalytic AB heterodimers that form a heterohexamer, three peripheral stalks each consisting of EG heterodimers, one central rotor including subunits D and F, and the regulatory subunits C and H. The proton translocation complex V0 consists of the proton transport subunit a, a ring of proteolipid subunits c9c'', rotary subunit d, subunits e and f, and the accessory subunits vah-19/Ac45 and vah-20/PRR.

Subunit of the V1 complex of vacuolar(H+)-ATPase (V-ATPase), a multisubunit enzyme composed of a peripheral complex (V1) that hydrolyzes ATP and a membrane integral complex (V0) that translocates protons. V-ATPase is responsible for acidifying and maintaining the pH of intracellular compartments and in some cell types, is targeted to the plasma membrane, where it is responsible for acidifying the extracellular environment. In neurons, required for necrotic cell death by promoting intracellular acidification. The protein is Probable V-type proton ATPase subunit G of Caenorhabditis briggsae.